A 359-amino-acid polypeptide reads, in one-letter code: tRNA-specific 2-thiouridylase MnmA (359 aa).

ATP-binding positions include 9–16 (GMSGGVDS) and methionine 35. Cysteine 105 serves as the catalytic Nucleophile. Cysteine 105 and cysteine 203 form a disulfide bridge. Position 129 (glycine 129) interacts with ATP. An interaction with tRNA region spans residues 153–155 (KDQ). The active-site Cysteine persulfide intermediate is cysteine 203. The interval 309–310 (RY) is interaction with tRNA.

The protein belongs to the MnmA/TRMU family.

The protein localises to the cytoplasm. It carries out the reaction S-sulfanyl-L-cysteinyl-[protein] + uridine(34) in tRNA + AH2 + ATP = 2-thiouridine(34) in tRNA + L-cysteinyl-[protein] + A + AMP + diphosphate + H(+). Its function is as follows. Catalyzes the 2-thiolation of uridine at the wobble position (U34) of tRNA, leading to the formation of s(2)U34. The sequence is that of tRNA-specific 2-thiouridylase MnmA from Acetivibrio thermocellus (strain ATCC 27405 / DSM 1237 / JCM 9322 / NBRC 103400 / NCIMB 10682 / NRRL B-4536 / VPI 7372) (Clostridium thermocellum).